The chain runs to 566 residues: Oxygen-dependent choline dehydrogenase (566 aa).

Residue 7–36 participates in FAD binding; it reads DYIICGAGSAGNVLATRLTEDPNVTVLLLE. The disordered stretch occupies residues 180–203; it reads NGYQQEGFGPMDRTVTPKGRRAST. Histidine 474 serves as the catalytic Proton acceptor.

The protein belongs to the GMC oxidoreductase family. The cofactor is FAD.

It carries out the reaction choline + A = betaine aldehyde + AH2. The catalysed reaction is betaine aldehyde + NAD(+) + H2O = glycine betaine + NADH + 2 H(+). The protein operates within amine and polyamine biosynthesis; betaine biosynthesis via choline pathway; betaine aldehyde from choline (cytochrome c reductase route): step 1/1. Its function is as follows. Involved in the biosynthesis of the osmoprotectant glycine betaine. Catalyzes the oxidation of choline to betaine aldehyde and betaine aldehyde to glycine betaine at the same rate. The chain is Oxygen-dependent choline dehydrogenase from Burkholderia ambifaria (strain MC40-6).